The primary structure comprises 850 residues: Protein argonaute 8 (850 aa).

The segment at 1–30 is disordered; that stretch reads MDTTLPPPQHMEREPLKSKSSLLPMTRRGN. Positions 247–361 constitute a PAZ domain; the sequence is PVVDFLIANQ…FPIELCELVS (115 aa). Positions 518 to 811 constitute a Piwi domain; sequence QSILGEVPPK…AAAQMATAMK (294 aa).

This sequence belongs to the argonaute family. Ago subfamily.

In terms of biological role, involved in RNA-mediated post-transcriptional gene silencing (PTGS). Main component of the RNA-induced silencing complex (RISC) that binds to a short guide RNA such as a microRNA (miRNA) or small interfering RNA (siRNA). RISC uses the mature miRNA or siRNA as a guide for slicer-directed cleavage of homologous mRNAs to repress gene expression. The sequence is that of Protein argonaute 8 (AGO8) from Arabidopsis thaliana (Mouse-ear cress).